The following is a 508-amino-acid chain: Maturase K (508 aa).

The protein belongs to the intron maturase 2 family. MatK subfamily.

It localises to the plastid. The protein resides in the chloroplast. Functionally, usually encoded in the trnK tRNA gene intron. Probably assists in splicing its own and other chloroplast group II introns. The chain is Maturase K from Lupinus cosentinii (West Australian blue lupine).